Here is a 57-residue protein sequence, read N- to C-terminus: Protein translocase subunit SecE (57 aa).

The chain crosses the membrane as a helical span at residues 33-53; it reads GLGILLVGFIGFVIFSIMTFV.

The protein belongs to the SecE/SEC61-gamma family. In terms of assembly, component of the Sec protein translocase complex. Heterotrimer consisting of SecY (alpha), SecG (beta) and SecE (gamma) subunits. The heterotrimers can form oligomers, although 1 heterotrimer is thought to be able to translocate proteins. Interacts with the ribosome. May interact with SecDF, and other proteins may be involved.

It localises to the cell membrane. Essential subunit of the Sec protein translocation channel SecYEG. Clamps together the 2 halves of SecY. May contact the channel plug during translocation. This chain is Protein translocase subunit SecE, found in Natronomonas pharaonis (strain ATCC 35678 / DSM 2160 / CIP 103997 / JCM 8858 / NBRC 14720 / NCIMB 2260 / Gabara) (Halobacterium pharaonis).